Reading from the N-terminus, the 316-residue chain is Homoserine kinase (316 aa).

97–107 is a binding site for ATP; sequence PPARGLGSSAS.

Belongs to the GHMP kinase family. Homoserine kinase subfamily.

The protein localises to the cytoplasm. The enzyme catalyses L-homoserine + ATP = O-phospho-L-homoserine + ADP + H(+). It functions in the pathway amino-acid biosynthesis; L-threonine biosynthesis; L-threonine from L-aspartate: step 4/5. Functionally, catalyzes the ATP-dependent phosphorylation of L-homoserine to L-homoserine phosphate. The protein is Homoserine kinase of Prochlorococcus marinus (strain MIT 9313).